Consider the following 237-residue polypeptide: Uridylate kinase (237 aa).

Lysine 11–glycine 14 is an ATP binding site. Glycine 53 lines the UMP pocket. The ATP site is built by glycine 54 and arginine 58. Residues aspartate 73 and threonine 134–threonine 141 each bind UMP. Residues threonine 161, tyrosine 167, and aspartate 170 each coordinate ATP.

The protein belongs to the UMP kinase family. As to quaternary structure, homohexamer.

The protein resides in the cytoplasm. It catalyses the reaction UMP + ATP = UDP + ADP. The protein operates within pyrimidine metabolism; CTP biosynthesis via de novo pathway; UDP from UMP (UMPK route): step 1/1. With respect to regulation, inhibited by UTP. Catalyzes the reversible phosphorylation of UMP to UDP. This Burkholderia mallei (strain NCTC 10247) protein is Uridylate kinase.